The chain runs to 120 residues: Putative ankyrin repeat protein RBE_1215 (120 aa).

2 ANK repeats span residues Asp-22–Ile-52 and Phe-59–Val-88.

This is Putative ankyrin repeat protein RBE_1215 from Rickettsia bellii (strain RML369-C).